The primary structure comprises 188 residues: uncharacterized protein (188 aa).

The protein localises to the plastid. Its subcellular location is the cyanelle. This is an uncharacterized protein from Cyanophora paradoxa.